The following is a 303-amino-acid chain: Pseudouridine-5'-phosphate glycosidase (303 aa).

The active-site Proton donor is E23. Residues K85 and V105 each coordinate substrate. D137 contributes to the Mn(2+) binding site. 139–141 (SQD) is a substrate binding site. K158 serves as the catalytic Nucleophile.

Belongs to the pseudouridine-5'-phosphate glycosidase family. Homotrimer. It depends on Mn(2+) as a cofactor.

It catalyses the reaction D-ribose 5-phosphate + uracil = psi-UMP + H2O. Functionally, catalyzes the reversible cleavage of pseudouridine 5'-phosphate (PsiMP) to ribose 5-phosphate and uracil. Functions biologically in the cleavage direction, as part of a pseudouridine degradation pathway. The polypeptide is Pseudouridine-5'-phosphate glycosidase (Myxococcus xanthus (strain DK1622)).